Here is a 158-residue protein sequence, read N- to C-terminus: Large ribosomal subunit protein uL11 (158 aa).

Residues 1–28 form a disordered region; sequence MAGTIEALVPGGQATPGPPLGPELGPTP.

This sequence belongs to the universal ribosomal protein uL11 family. In terms of assembly, part of the ribosomal stalk of the 50S ribosomal subunit. Interacts with L10 and the large rRNA to form the base of the stalk. L10 forms an elongated spine to which L12 dimers bind in a sequential fashion forming a multimeric L10(L12)X complex.

In terms of biological role, forms part of the ribosomal stalk which helps the ribosome interact with GTP-bound translation factors. The protein is Large ribosomal subunit protein uL11 of Halorubrum lacusprofundi (strain ATCC 49239 / DSM 5036 / JCM 8891 / ACAM 34).